A 128-amino-acid polypeptide reads, in one-letter code: Histone H2A.2 (128 aa).

The protein belongs to the histone H2A family. In terms of assembly, the nucleosome is a histone octamer containing two molecules each of H2A, H2B, H3 and H4 assembled in one H3-H4 heterotetramer and two H2A-H2B heterodimers. The octamer wraps approximately 147 bp of DNA. Expressed in the generative cell within the bicellular pollen. Not detected in other reproductive or vegetative tissues.

It is found in the nucleus. The protein resides in the chromosome. In terms of biological role, core component of nucleosome. Nucleosomes wrap and compact DNA into chromatin, limiting DNA accessibility to the cellular machineries which require DNA as a template. Histones thereby play a central role in transcription regulation, DNA repair, DNA replication and chromosomal stability. DNA accessibility is regulated via a complex set of post-translational modifications of histones, also called histone code, and nucleosome remodeling. May be involved in the repression of gene expression in male gametes. This chain is Histone H2A.2 (gH2A), found in Lilium longiflorum (Trumpet lily).